The primary structure comprises 210 residues: Thiamine-phosphate synthase (210 aa).

Residues 39-43 and Asn71 each bind 4-amino-2-methyl-5-(diphosphooxymethyl)pyrimidine; that span reads QLREK. Positions 72 and 91 each coordinate Mg(2+). A 4-amino-2-methyl-5-(diphosphooxymethyl)pyrimidine-binding site is contributed by Ser110. Residue 134–136 participates in 2-[(2R,5Z)-2-carboxy-4-methylthiazol-5(2H)-ylidene]ethyl phosphate binding; that stretch reads TPT. Lys137 serves as a coordination point for 4-amino-2-methyl-5-(diphosphooxymethyl)pyrimidine. Gly163 contributes to the 2-[(2R,5Z)-2-carboxy-4-methylthiazol-5(2H)-ylidene]ethyl phosphate binding site.

Belongs to the thiamine-phosphate synthase family. The cofactor is Mg(2+).

The catalysed reaction is 2-[(2R,5Z)-2-carboxy-4-methylthiazol-5(2H)-ylidene]ethyl phosphate + 4-amino-2-methyl-5-(diphosphooxymethyl)pyrimidine + 2 H(+) = thiamine phosphate + CO2 + diphosphate. It carries out the reaction 2-(2-carboxy-4-methylthiazol-5-yl)ethyl phosphate + 4-amino-2-methyl-5-(diphosphooxymethyl)pyrimidine + 2 H(+) = thiamine phosphate + CO2 + diphosphate. It catalyses the reaction 4-methyl-5-(2-phosphooxyethyl)-thiazole + 4-amino-2-methyl-5-(diphosphooxymethyl)pyrimidine + H(+) = thiamine phosphate + diphosphate. It functions in the pathway cofactor biosynthesis; thiamine diphosphate biosynthesis; thiamine phosphate from 4-amino-2-methyl-5-diphosphomethylpyrimidine and 4-methyl-5-(2-phosphoethyl)-thiazole: step 1/1. In terms of biological role, condenses 4-methyl-5-(beta-hydroxyethyl)thiazole monophosphate (THZ-P) and 2-methyl-4-amino-5-hydroxymethyl pyrimidine pyrophosphate (HMP-PP) to form thiamine monophosphate (TMP). The polypeptide is Thiamine-phosphate synthase (Campylobacter jejuni subsp. jejuni serotype O:2 (strain ATCC 700819 / NCTC 11168)).